The following is a 944-amino-acid chain: Spindle pole body component 110 (944 aa).

Threonine 18 carries the post-translational modification Phosphothreonine. A disordered region spans residues 23-110 (IKSKRNTTQT…RKRNLIDDLK (88 aa)). A compositionally biased stretch (polar residues) spans 28-46 (NTTQTQVVSPTKVPNANNG). Positions 54 to 59 (KKRQRR) match the Nuclear localization signal motif. Serine 60 is modified (phosphoserine; by MPS1). Phosphothreonine; by MPS1 occurs at positions 64 and 68. Over residues 67 to 78 (STRLFSEASQFD) the composition is skewed to polar residues. Residue serine 80 is modified to Phosphoserine. Basic and acidic residues predominate over residues 96–110 (NVDKSRKRNLIDDLK). Residues 119-799 (LKEQEVREHQ…ILNERRKDND (681 aa)) adopt a coiled-coil conformation. Serine 529 carries the post-translational modification Phosphoserine. 2 short sequence motifs (nuclear localization signal) span residues 726–731 (KEKYKR) and 742–747 (RLRREK). Residues 900-927 (SFKTVALLVLACVRMKRIAFYRRSDDNR) form a calmodulin-binding region.

It belongs to the SPC110 family. In terms of assembly, homodimer. Component of the SPC110 complex containing at least CMD1, SPC29 and SCP110. Interacts with SPC97 and SPC98.

The protein resides in the nucleus. The protein localises to the cytoplasm. It is found in the cytoskeleton. It localises to the microtubule organizing center. Its subcellular location is the spindle pole body. In terms of biological role, component of the spindle pole body (SPB) required for the proper execution of spindle pole body (SPB) duplication. Potential role in cross-linking filaments or anchoring other molecules. It is essential for growth. This Saccharomyces cerevisiae (strain YJM789) (Baker's yeast) protein is Spindle pole body component 110 (SPC110).